The sequence spans 329 residues: Alpha-tubulin N-acetyltransferase 1 (329 aa).

In terms of domain architecture, N-acetyltransferase spans 5–185 (SQVALLPKLS…NNFVVFHRYF (181 aa)). Acetyl-CoA-binding positions include 119 to 132 (FFVD…GFGK) and 155 to 164 (SVKFLAFLQK). Disordered regions lie at residues 218 to 261 (PKYQ…GVGK) and 306 to 329 (GARR…TPEH). Residues 220 to 229 (YQSTTGPNNN) are compositionally biased toward polar residues. Residues 238–249 (TPPPPPLPPPLV) are compositionally biased toward pro residues. Residues 313–329 (PTRSGVQYNIISGTPEH) show a composition bias toward polar residues.

It belongs to the acetyltransferase ATAT1 family.

The enzyme catalyses L-lysyl-[alpha-tubulin] + acetyl-CoA = N(6)-acetyl-L-lysyl-[alpha-tubulin] + CoA + H(+). Specifically acetylates 'Lys-40' in alpha-tubulin on the lumenal side of microtubules. Promotes microtubule destabilization and accelerates microtubule dynamics; this activity may be independent of acetylation activity. Acetylates alpha-tubulin with a slow enzymatic rate, due to a catalytic site that is not optimized for acetyl transfer. Enters the microtubule through each end and diffuses quickly throughout the lumen of microtubules. Acetylates only long/old microtubules because of its slow acetylation rate since it does not have time to act on dynamically unstable microtubules before the enzyme is released. In Trypanosoma cruzi (strain CL Brener), this protein is Alpha-tubulin N-acetyltransferase 1.